Reading from the N-terminus, the 315-residue chain is tRNA dimethylallyltransferase (315 aa).

11 to 18 contributes to the ATP binding site; it reads GPTASGKS. Position 13-18 (13-18) interacts with substrate; sequence TASGKS. Interaction with substrate tRNA stretches follow at residues 36-39 and 160-164; these read DSMQ and QRLIR.

The protein belongs to the IPP transferase family. In terms of assembly, monomer. Mg(2+) is required as a cofactor.

It carries out the reaction adenosine(37) in tRNA + dimethylallyl diphosphate = N(6)-dimethylallyladenosine(37) in tRNA + diphosphate. Functionally, catalyzes the transfer of a dimethylallyl group onto the adenine at position 37 in tRNAs that read codons beginning with uridine, leading to the formation of N6-(dimethylallyl)adenosine (i(6)A). This chain is tRNA dimethylallyltransferase, found in Rickettsia bellii (strain OSU 85-389).